Reading from the N-terminus, the 1193-residue chain is MSTSSFVHLHIHTEFSLADSTIRVPEKPEQAHPKKAKQANLLSRAVELGLPALAVTDLNNLFALIKFYKAAETVGIKPISGADLLIAEPEHPPWGMTLLCRDHAGYLNLSQLISRGWLEGHRPEGGVAVHPDWVRDHHKNLFALIGRHSLAGQLLAKGRADLAEQQLADWQHVFGDGLHLELTRTGRDGEEPFNQFALQVAGIRGIPVIASNDVRFLVQSDFLAHEARVCIASGRMLDDPKRPRTYSEQQYLRSSEEMAALFADIPDALDNTRTLAQRCNIEMRLGTYFLPNYPVPNDETLDSWIRKQSHEGLEARLLKHPLAPGQTREDYVTRLEFELDTIIKMGFSGYFLIVADFIQWGKQQGIPIGPGRGSGAGSLVAWALLITDLDPLPYNLLFERFLNPERVSMPDFDIDFCMERRDEVISYVARKYGRERVSQIITYGTMAAKAVVRDVGRVLGFPYGLVDSVAKLIPSTLGITLKDAMGEGETNDNASAELIQRYQAEEDVQELLNLARQLEDLTRNAGKHAGGVVIAPNPLTEFCPLFAEHDENGRGKNPVTQFDKNDVEEVGLVKFDFLGLRTLTIIDWAVKAINKRHARACIDPVDITALPLDDIPTYKDVFASGNTSAVFQFESSGMRRLLKDARPDRFEDLIALVSLYRPGPMDLIPEFTARKHGVQETIYPDPRTKNILKDTYGIMVYQEQVMQMAQIVGGYSLGSADLLRRAMGKKVPAEMAKHREIFREGAAKGGMDAVKADEIFDLMEKFAGYGFNKSHAAAYALVSYQTAWLKRHYPAEFMAATLSSDMDNTDKVVGFLDEARNLNLKVLRPNINHSAYMFEATHADTIQYGLGAIKGVGQSVCEAIVKERLHYGPYTSLLDFCTRVTSAKLNRRALEAMIHAGALDELGKNRASVMLQLPEVIKATEQMSRERESGQNSLFGNADPGTPVIQLDLPECEEWPLTRMLNGERETLGLYFSGHPFDPYRKQVKELVGCDLNTSALERILGSQQRGNGEKRTWQPEVNTILAGLVVSVRRKGDSQVFVQLEDGRGRIECSAFSDALAEFGHLLTRDRILIVKGGLREDEFNGGYSLRIRQCWDYAQLCTDYAQRLLLRVDLRTSHAWERIDAILARYRPGNTPLRLDLLLNSTHGPVAGTLDLSGGQSVRIEQSLLDKLQKDPAVSKLKVKYTPPWVQ.

It belongs to the DNA polymerase type-C family. DnaE subfamily. As to quaternary structure, DNA polymerase III contains a core (composed of alpha, epsilon and theta chains) that associates with a tau subunit. This core dimerizes to form the PolIII' complex. PolIII' associates with the gamma complex (composed of gamma, delta, delta', psi and chi chains) and with the beta chain to form the complete DNA polymerase III complex.

It localises to the cytoplasm. It carries out the reaction DNA(n) + a 2'-deoxyribonucleoside 5'-triphosphate = DNA(n+1) + diphosphate. DNA polymerase III is a complex, multichain enzyme responsible for most of the replicative synthesis in bacteria. This DNA polymerase also exhibits 3' to 5' exonuclease activity. The alpha chain is the DNA polymerase. This Xylella fastidiosa (strain Temecula1 / ATCC 700964) protein is DNA polymerase III subunit alpha (dnaE).